Consider the following 809-residue polypeptide: Plasminogen (809 aa).

The signal sequence occupies residues M1–G19. Residues D20–I98 form the PAN domain. Cystine bridges form between C49–C73, C53–C61, C103–C181, C124–C164, C152–C176, C185–C262, C188–C316, C206–C245, C234–C257, C275–C352, C296–C335, C324–C347, C377–C454, C398–C437, C426–C449, C480–C559, C501–C542, C530–C554, C566–C684, C576–C584, C606–C622, C698–C765, C728–C744, and C755–C783. Kringle domains follow at residues C103–C181 and C185–C262. O-linked (GalNAc...) threonine glycosylation occurs at T268. Kringle domains lie at C275 to C352, C377 to C454, and C480 to C559. N308 carries N-linked (GlcNAc...) asparagine glycosylation. Positions V580 to R807 constitute a Peptidase S1 domain. The residue at position 596 (S596) is a Phosphoserine. Catalysis depends on charge relay system residues H621 and D664. Residue S759 is the Charge relay system of the active site.

This sequence belongs to the peptidase S1 family. Plasminogen subfamily. In terms of assembly, interacts with CSPG4 and AMOT. Interacts (via the Kringle domains) with HRG; the interaction tethers PLG to the cell surface and enhances its activation. Interacts (via Kringle 4 domain) with ADA; the interaction stimulates PLG activation when in complex with DPP4. Angiostatin: Interacts with ATP5F1A; the interaction inhibits most of the angiogenic effects of angiostatin. N-linked glycan contains N-acetyllactosamine, sialic acid and is core fucosylated. O-linked glycans consist of Gal-GalNAc disaccharide which is modified with up to 2 sialic acid residues (microheterogeneity). Post-translationally, in the presence of the inhibitor, the activation involves only cleavage after Arg-579, yielding two chains held together by two disulfide bonds. In the absence of the inhibitor, the activation involves additionally the removal of the activation peptide.

The protein resides in the secreted. It carries out the reaction Preferential cleavage: Lys-|-Xaa &gt; Arg-|-Xaa, higher selectivity than trypsin. Converts fibrin into soluble products.. Converted into plasmin by plasminogen activators, both plasminogen and its activator being bound to fibrin. Cannot be activated with streptokinase. Its function is as follows. Plasmin dissolves the fibrin of blood clots and acts as a proteolytic factor in a variety of other processes including embryonic development, tissue remodeling, tumor invasion, and inflammation. In ovulation, weakens the walls of the Graafian follicle. It activates the urokinase-type plasminogen activator, collagenases and several complement zymogens, such as C1, C4 and C5. Cleavage of fibronectin and laminin leads to cell detachment and apoptosis. Also cleaves fibrin, thrombospondin and von Willebrand factor. Its role in tissue remodeling and tumor invasion may be modulated by CSPG4. Binds to cells. The polypeptide is Plasminogen (PLG) (Sus scrofa (Pig)).